The primary structure comprises 114 residues: Protein lin-52 homolog (114 aa).

Ser-26 and Ser-51 each carry phosphoserine.

This sequence belongs to the lin-52 family. In terms of assembly, component of the DREAM complex (also named LINC complex) at least composed of E2F4, E2F5, LIN9, LIN37, LIN52, LIN54, MYBL1, MYBL2, RBL1, RBL2, RBBP4, TFDP1 and TFDP2. The complex exists in quiescent cells where it represses cell cycle-dependent genes. It dissociates in S phase when LIN9, LIN37, LIN52 and LIN54 form a subcomplex that binds to MYBL2.

This is Protein lin-52 homolog (LIN52) from Pongo abelii (Sumatran orangutan).